Reading from the N-terminus, the 135-residue chain is UPF0355 protein SH2586 (135 aa).

Positions N105–S135 are disordered.

This sequence belongs to the UPF0355 family.

The sequence is that of UPF0355 protein SH2586 from Staphylococcus haemolyticus (strain JCSC1435).